We begin with the raw amino-acid sequence, 199 residues long: uncharacterized protein (199 aa).

In terms of domain architecture, G-patch spans 112–160; the sequence is PKSLGYRVLSQYGWSPQGDTAGLGLENQGRRAPVRAFRVKNDTIGLGTK.

This is an uncharacterized protein from Schizosaccharomyces pombe (strain 972 / ATCC 24843) (Fission yeast).